The chain runs to 301 residues: Putative carboxypeptidase slr1534 (301 aa).

The Nucleophile role is filled by S116. Active-site charge relay system residues include E206 and H276.

It belongs to the peptidase S66 family.

The sequence is that of Putative carboxypeptidase slr1534 from Synechocystis sp. (strain ATCC 27184 / PCC 6803 / Kazusa).